The following is a 509-amino-acid chain: MQFLWLCLLSAVTLQFTGTLAFYPIKLPDFTKGLVSNHGSIDRRFFTFPGLYKHAHTGSTTLNIRRGPSNYRRDNNYPAQIASPPTAPNTLGINNDGYDFSYFSEVKVGSEGQKMWMLIDTGASGTWVFGSDCTSKACGRHNTFGKEDSKTIKVTDEKWGVTYGTGKVSGVIVNDTMSFAGFELVTPFGSASTASDDFLNYPMDGILGIGPQDPNAKTPTVVQLLMQQKLLKSNVIGINLQRASEGATDGQITFGDIDKSKFSGELIYSNVVPDGYQWEIAMDDLIMDGKSLNLKGRTGIIDTGTSFLILPPADADLIHSMIPQANKGSGFYTLPCSTKVDIKLSIGGVEYTIQPDDYVGNETATKGTCNSLIVGRQILGPKQWLVGDVFLKNVYSVFDFDKNRVGLAARKYAGTKNPPSSTPSPGMFLLHAILCPKTISVLMLHIDPTSNKAPSGGSPGLPAESGSDSTTNGEATNGATSSPNSSSSVLTPTWLTLAVFFAIGSSLWS.

A signal peptide spans 1 to 21; that stretch reads MQFLWLCLLSAVTLQFTGTLA. Residues 102–408 form the Peptidase A1 domain; it reads YFSEVKVGSE…DFDKNRVGLA (307 aa). D120 is an active-site residue. An N-linked (GlcNAc...) asparagine glycan is attached at N174. The active site involves D302. An N-linked (GlcNAc...) asparagine glycan is attached at N361. Residues 451-489 are disordered; sequence NKAPSGGSPGLPAESGSDSTTNGEATNGATSSPNSSSSV. Positions 466–480 are enriched in polar residues; that stretch reads GSDSTTNGEATNGAT. N484 carries N-linked (GlcNAc...) asparagine glycosylation. S485 carries the GPI-anchor amidated serine lipid modification. Positions 486–509 are cleaved as a propeptide — removed in mature form; sequence SSSVLTPTWLTLAVFFAIGSSLWS.

This sequence belongs to the peptidase A1 family.

It is found in the cell membrane. Functionally, probable GPI-anchored aspartic-type endopeptidase which contributes to virulence. In Trichophyton verrucosum (strain HKI 0517), this protein is Probable aspartic-type endopeptidase CTSD (CTSD).